The chain runs to 317 residues: Acetyl-coenzyme A carboxylase carboxyl transferase subunit alpha (317 aa).

Residues arginine 43 to glutamate 293 form the CoA carboxyltransferase C-terminal domain.

The protein belongs to the AccA family. Acetyl-CoA carboxylase is a heterohexamer composed of biotin carboxyl carrier protein (AccB), biotin carboxylase (AccC) and two subunits each of ACCase subunit alpha (AccA) and ACCase subunit beta (AccD).

Its subcellular location is the cytoplasm. It catalyses the reaction N(6)-carboxybiotinyl-L-lysyl-[protein] + acetyl-CoA = N(6)-biotinyl-L-lysyl-[protein] + malonyl-CoA. It functions in the pathway lipid metabolism; malonyl-CoA biosynthesis; malonyl-CoA from acetyl-CoA: step 1/1. In terms of biological role, component of the acetyl coenzyme A carboxylase (ACC) complex. First, biotin carboxylase catalyzes the carboxylation of biotin on its carrier protein (BCCP) and then the CO(2) group is transferred by the carboxyltransferase to acetyl-CoA to form malonyl-CoA. This chain is Acetyl-coenzyme A carboxylase carboxyl transferase subunit alpha, found in Rhizobium rhizogenes (strain K84 / ATCC BAA-868) (Agrobacterium radiobacter).